The sequence spans 215 residues: Urease accessory protein UreG (215 aa).

24–31 (GPVGSGKT) lines the GTP pocket.

This sequence belongs to the SIMIBI class G3E GTPase family. UreG subfamily. As to quaternary structure, homodimer. UreD, UreF and UreG form a complex that acts as a GTP-hydrolysis-dependent molecular chaperone, activating the urease apoprotein by helping to assemble the nickel containing metallocenter of UreC. The UreE protein probably delivers the nickel.

It is found in the cytoplasm. Functionally, facilitates the functional incorporation of the urease nickel metallocenter. This process requires GTP hydrolysis, probably effectuated by UreG. The protein is Urease accessory protein UreG of Burkholderia ambifaria (strain ATCC BAA-244 / DSM 16087 / CCUG 44356 / LMG 19182 / AMMD) (Burkholderia cepacia (strain AMMD)).